We begin with the raw amino-acid sequence, 212 residues long: Large ribosomal subunit protein uL3 (212 aa).

Glutamine 153 carries the N5-methylglutamine modification.

This sequence belongs to the universal ribosomal protein uL3 family. Part of the 50S ribosomal subunit. Forms a cluster with proteins L14 and L19. In terms of processing, methylated by PrmB.

In terms of biological role, one of the primary rRNA binding proteins, it binds directly near the 3'-end of the 23S rRNA, where it nucleates assembly of the 50S subunit. The chain is Large ribosomal subunit protein uL3 from Azoarcus sp. (strain BH72).